The following is a 192-amino-acid chain: Succinate dehydrogenase cytochrome b560 subunit, mitochondrial (192 aa).

A mitochondrion-targeting transit peptide spans 1–27 (MFGRTLNTFTSRNAPLVRNFDKFIVNN). At 48–83 (YSTQAKKPFTITEKRIDELKTPYQPTSPHLTIYKFP) the chain is on the mitochondrial matrix side. Residues 84–113 (LPAVMSIMHRATGICLALGITGLAGVTLFA) form a helical membrane-spanning segment. Over 114–131 (PHDAIHYIQLLHTQYPAL) the chain is Mitochondrial intermembrane. The helical transmembrane segment at 132-156 (VYPAKFAVALPLTYHFCTGVRHIIW) threads the bilayer. Heme b is bound at residue histidine 146. Over 157–164 (DETVKGLS) the chain is Mitochondrial matrix. The chain crosses the membrane as a helical span at residues 165-186 (ISQIESSGKVLLAVVAVLSTIF). Residues 187–189 (TFV) are Mitochondrial intermembrane-facing.

This sequence belongs to the cytochrome b560 family. As to quaternary structure, component of complex II composed of four subunits: the flavoprotein (FP) sdha, iron-sulfur protein (IP) sdhb, and a cytochrome b560 composed of sdhc and sdhd. Requires heme b as cofactor.

The protein localises to the mitochondrion inner membrane. It functions in the pathway carbohydrate metabolism; tricarboxylic acid cycle. Functionally, membrane-anchoring subunit of succinate dehydrogenase (SDH) that is involved in complex II of the mitochondrial electron transport chain and is responsible for transferring electrons from succinate to ubiquinone (coenzyme Q). In Dictyostelium discoideum (Social amoeba), this protein is Succinate dehydrogenase cytochrome b560 subunit, mitochondrial (sdhC).